Here is a 375-residue protein sequence, read N- to C-terminus: Thioredoxin reductase 1, mitochondrial (375 aa).

A mitochondrion-targeting transit peptide spans 1 to 37 (MNCVSRLKCLISKARSFARLGGESTLSQPPSLASAAF). FAD-binding positions include 58-61 (SGPA), 79-80 (FE), 87-92 (IAPGGQ), Asn-101, Val-134, Cys-192, Asp-337, and 344-346 (RQA). The cysteines at positions 189 and 192 are disulfide-linked.

The protein belongs to the class-II pyridine nucleotide-disulfide oxidoreductase family. As to quaternary structure, homodimer. FAD is required as a cofactor. Ubiquitous.

It is found in the cytoplasm. The protein resides in the mitochondrion. The enzyme catalyses [thioredoxin]-dithiol + NADP(+) = [thioredoxin]-disulfide + NADPH + H(+). NADPH-dependent thioredoxin-disulfide reductase that reduces thioredoxins O1, O2 and F3. The sequence is that of Thioredoxin reductase 1, mitochondrial (NTR1) from Arabidopsis thaliana (Mouse-ear cress).